A 488-amino-acid polypeptide reads, in one-letter code: Regulatory protein ViaA (488 aa).

It belongs to the ViaA family. As to quaternary structure, homodimer. Interacts with RavA.

It localises to the cytoplasm. In terms of biological role, component of the RavA-ViaA chaperone complex, which may act on the membrane to optimize the function of some of the respiratory chains. ViaA stimulates the ATPase activity of RavA. The polypeptide is Regulatory protein ViaA (Yersinia pseudotuberculosis serotype O:1b (strain IP 31758)).